We begin with the raw amino-acid sequence, 336 residues long: MKSAKKLLSVLCLGIFILTFTACDMVEKTPEAKAKSTIAKVNGEKIQRKDLDESPSMQQVLSQIKTQYGEEFEKSEQGKEVIKEQKKQILENLITEKVLLQKGKELKVIPKDEELNKEADKKVNEIKAVYNNDEKKFEETLKSTGFTKETLKEYLRDQIVIEKVINEVTKDVKVEDKDAQKYYNENQSMFTEKPNTMNVSHILVKTEDEAKKVKKRLDAKEDFAKVAKEVSQDPGSKDKGGLLGDISYSDSNYDPTFMKAAIALKEGTISNPVHTQWGYHIIKVNSKKEYPVKKFDSVKEDIKKQLKQEKQQEAYTKKIEEWKKASKIKTYEKNLL.

Residues 1-22 (MKSAKKLLSVLCLGIFILTFTA) form the signal peptide. The N-palmitoyl cysteine moiety is linked to residue Cys23. The S-diacylglycerol cysteine moiety is linked to residue Cys23. In terms of domain architecture, PpiC spans 194–286 (PNTMNVSHIL…WGYHIIKVNS (93 aa)).

This sequence belongs to the PrsA family.

The protein localises to the cell membrane. The catalysed reaction is [protein]-peptidylproline (omega=180) = [protein]-peptidylproline (omega=0). Functionally, plays a major role in protein secretion by helping the post-translocational extracellular folding of several secreted proteins. The polypeptide is Foldase protein PrsA (Clostridium botulinum (strain ATCC 19397 / Type A)).